The chain runs to 749 residues: Small G protein signaling modulator 3 (749 aa).

The Rab-GAP TBC domain maps to 113–304 (GIPHGMRPQL…RIWDLFFYEG (192 aa)). Position 405 is a phosphoserine (S405). Residues 414–438 (EDDLEALKAKNIKQTELVADLREAI) are a coiled coil. Positions 479–538 (SHRRRAKALLDFERHDDDELGFRKNDIITIISQKDEHCWVGELNGLRGWFPAKFVEVLDE) constitute an SH3 domain. One can recognise an RUN domain in the interval 554-717 (GVTDLVRGTL…FAFSLSQDWE (164 aa)).

The protein belongs to the small G protein signaling modulator family. As to quaternary structure, interacts with GJA1. Interaction with GJA1 induces its degradation. Interacts (via RUN domain) with NF2 (via C-terminus). Interacts with RAB3A, RAB4A, RAB5A, RAB8A, RAB11A, RAP1A, RAP1B, RAP2A, RAP2B and PDCD6I. No interaction with RAB27A. No interaction with GJB1 or GJD2. In terms of tissue distribution, expressed in brain, liver, kidney and testis. Moderately expressed in heart, very weakly in lung and muscle. Not expressed in spleen.

It localises to the cytoplasm. Its function is as follows. May play a cooperative role in NF2-mediated growth suppression of cells. May act as a modulator of small G protein RAB- and RAP-mediated neuronal signal transduction and vesicular transportation pathways. In Rattus norvegicus (Rat), this protein is Small G protein signaling modulator 3.